The primary structure comprises 313 residues: Type I restriction enzyme EcoprrI endonuclease subunit (313 aa).

Belongs to the HsdR family. The type I restriction/modification system is composed of three polypeptides R, M and S; the restriction enzyme has stoichiometry R(2)M(2)S(1) while the methyltransferase is M(2)S(1).

The catalysed reaction is Endonucleolytic cleavage of DNA to give random double-stranded fragments with terminal 5'-phosphates, ATP is simultaneously hydrolyzed.. Functionally, the subtype C restriction (R) subunit of a type I restriction enzyme that recognizes 5'-CCAN(7)RTGC-3' and cleaves a random distance away. The R subunit is required for both endonuclease and ATPase activities but not for modification. Cleaves only non-methylated DNA, hemi-methylated and fully methylated DNA are not substrates. After locating a non-methylated recognition site, the enzyme complex serves as a molecular motor that translocates DNA in an ATP-dependent manner until a collision occurs that triggers cleavage. The prr locus restricts phage T4 mutants lacking polynucleotide kinase or RNA ligase; T4 mutants lacking these genes manifest a T4-induced anticodon nuclease (ACNase). This is a putative 'masking-agent' for the ACNase encoded by prrC. It is thought that Stp and other T4-encoded ACNase factors counteract the masking agents, thus activating the latent ACNase. This is Type I restriction enzyme EcoprrI endonuclease subunit from Escherichia coli.